Consider the following 619-residue polypeptide: Type VI secretion system component TssF1 (619 aa).

As to quaternary structure, interacts with TssA1.

In terms of biological role, core component of the H1 type VI (H1-T6SS) secretion system that plays a role in the release of toxins targeting both eukaryotic and prokaryotic species. The chain is Type VI secretion system component TssF1 from Pseudomonas aeruginosa (strain ATCC 15692 / DSM 22644 / CIP 104116 / JCM 14847 / LMG 12228 / 1C / PRS 101 / PAO1).